The following is a 763-amino-acid chain: Phosphoglycerol transferase I (763 aa).

The next 4 helical transmembrane spans lie at 1-21 (MSELLSFALFLASVLIYAWKA), 26-46 (WWFAATLTVLGLFVVLNITLF), 77-97 (ILPGIGIVLGLTAVFGALGWI), and 108-128 (FGYSLLALLLALGSVDASPAF).

Belongs to the OpgB family.

The protein localises to the cell inner membrane. The catalysed reaction is a phosphatidylglycerol + a membrane-derived-oligosaccharide D-glucose = a 1,2-diacyl-sn-glycerol + a membrane-derived-oligosaccharide 6-(glycerophospho)-D-glucose.. It functions in the pathway glycan metabolism; osmoregulated periplasmic glucan (OPG) biosynthesis. In terms of biological role, transfers a phosphoglycerol residue from phosphatidylglycerol to the membrane-bound nascent glucan backbones. In Escherichia coli O127:H6 (strain E2348/69 / EPEC), this protein is Phosphoglycerol transferase I.